The primary structure comprises 423 residues: UDP-N-acetylglucosamine 1-carboxyvinyltransferase 2 (423 aa).

Position 23–24 (23–24) interacts with phosphoenolpyruvate; it reads KN. Arginine 96 provides a ligand contact to UDP-N-acetyl-alpha-D-glucosamine. Residue cysteine 120 is the Proton donor of the active site. Residue cysteine 120 is modified to 2-(S-cysteinyl)pyruvic acid O-phosphothioketal. UDP-N-acetyl-alpha-D-glucosamine contacts are provided by residues 125–129, aspartate 309, and valine 331; that span reads RPIDL.

The protein belongs to the EPSP synthase family. MurA subfamily.

Its subcellular location is the cytoplasm. It carries out the reaction phosphoenolpyruvate + UDP-N-acetyl-alpha-D-glucosamine = UDP-N-acetyl-3-O-(1-carboxyvinyl)-alpha-D-glucosamine + phosphate. It functions in the pathway cell wall biogenesis; peptidoglycan biosynthesis. Its function is as follows. Cell wall formation. Adds enolpyruvyl to UDP-N-acetylglucosamine. The protein is UDP-N-acetylglucosamine 1-carboxyvinyltransferase 2 of Streptococcus agalactiae serotype III (strain NEM316).